Reading from the N-terminus, the 1940-residue chain is Myosin-2 (1940 aa).

The Myosin N-terminal SH3-like domain maps to 33–82 (DAKTSVFVAEPKESFVKGTVQSREGGKVTVKTEAGATLTVKEDQVFPMNP). Phosphothreonine occurs at positions 64 and 69. The Myosin motor domain occupies 86-783 (DKIEDMAMMT…LLGLLEEMRD (698 aa)). Lys-130 carries the N6,N6,N6-trimethyllysine modification. 179 to 186 (GESGAGKT) provides a ligand contact to ATP. Tyr-389 is modified (phosphotyrosine). Residue Ser-392 is modified to Phosphoserine. At Thr-419 the chain carries Phosphothreonine. Ser-625 carries the phosphoserine modification. Residues 660–682 (LNKLMTNLRSTHPHFVRCIIPNE) form an actin-binding region. At His-758 the chain carries Pros-methylhistidine. The interval 762-776 (KFGHTKVFFKAGLLG) is actin-binding. The IQ domain occupies 786–815 (LAQLITRTQARCRGFLARVEYQKMVERRES). The stretch at 844 to 1940 (LLKSAETEKE…EVHTKVISEE (1097 aa)) forms a coiled coil. Phosphoserine is present on residues Ser-1093, Ser-1097, Ser-1163, and Ser-1238. The segment at 1154–1173 (RLEEAGGATSAQIEMNKKRE) is disordered. Position 1242 is a phosphothreonine (Thr-1242). At Ser-1244 the chain carries Phosphoserine. Thr-1256 bears the Phosphothreonine mark. At Ser-1262 the chain carries Phosphoserine. At Thr-1287 the chain carries Phosphothreonine. Ser-1289, Ser-1293, Ser-1304, and Ser-1307 each carry phosphoserine. At Tyr-1465 the chain carries Phosphotyrosine. Thr-1468 is modified (phosphothreonine). Ser-1475 carries the post-translational modification Phosphoserine. Position 1493 is a phosphotyrosine (Tyr-1493). Ser-1496 carries the phosphoserine modification. Thr-1502 carries the phosphothreonine modification. Ser-1515 bears the Phosphoserine mark. Thr-1518 is modified (phosphothreonine). 6 positions are modified to phosphoserine: Ser-1543, Ser-1555, Ser-1575, Ser-1601, Ser-1715, and Ser-1727. Phosphothreonine is present on residues Thr-1731 and Thr-1737. Phosphoserine is present on Ser-1740. Residues 1884–1920 (KRQAEEAEEQSNTNLSKFRKLQHELEEAEERADIAES) form a disordered region.

This sequence belongs to the TRAFAC class myosin-kinesin ATPase superfamily. Myosin family. Muscle myosin is a hexameric protein that consists of 2 heavy chain subunits (MHC), 2 alkali light chain subunits (MLC) and 2 regulatory light chain subunits (MLC-2). Interacts with GCSAM.

It is found in the cytoplasm. The protein localises to the myofibril. Myosins are actin-based motor molecules with ATPase activity essential for muscle contraction. This chain is Myosin-2 (MYH2), found in Canis lupus familiaris (Dog).